Reading from the N-terminus, the 335-residue chain is Protein-glutamate methylesterase/protein-glutamine glutaminase 3 (335 aa).

One can recognise a Response regulatory domain in the interval 2–119; the sequence is RIGIVNDMPL…GNPQTAAAPL (118 aa). A 4-aspartylphosphate modification is found at aspartate 53. One can recognise a CheB-type methylesterase domain in the interval 144–335; the sequence is PKAGGARQRL…IAPRLAEVFD (192 aa). Catalysis depends on residues serine 159, histidine 186, and aspartate 279.

It belongs to the CheB family. Phosphorylated by CheA. Phosphorylation of the N-terminal regulatory domain activates the methylesterase activity.

It is found in the cytoplasm. It catalyses the reaction [protein]-L-glutamate 5-O-methyl ester + H2O = L-glutamyl-[protein] + methanol + H(+). It carries out the reaction L-glutaminyl-[protein] + H2O = L-glutamyl-[protein] + NH4(+). Its function is as follows. Involved in chemotaxis. Part of a chemotaxis signal transduction system that modulates chemotaxis in response to various stimuli. Catalyzes the demethylation of specific methylglutamate residues introduced into the chemoreceptors (methyl-accepting chemotaxis proteins or MCP) by CheR. Also mediates the irreversible deamidation of specific glutamine residues to glutamic acid. This is Protein-glutamate methylesterase/protein-glutamine glutaminase 3 from Pseudomonas aeruginosa (strain ATCC 15692 / DSM 22644 / CIP 104116 / JCM 14847 / LMG 12228 / 1C / PRS 101 / PAO1).